A 617-amino-acid chain; its full sequence is Dihydroxy-acid dehydratase (617 aa).

Mg(2+) is bound at residue Asp81. Cys122 contacts [2Fe-2S] cluster. Asp123 and Lys124 together coordinate Mg(2+). Lys124 is modified (N6-carboxylysine). Residue Cys197 participates in [2Fe-2S] cluster binding. Residue Glu493 coordinates Mg(2+). The active-site Proton acceptor is the Ser519.

The protein belongs to the IlvD/Edd family. In terms of assembly, homodimer. Requires [2Fe-2S] cluster as cofactor. The cofactor is Mg(2+).

It carries out the reaction (2R)-2,3-dihydroxy-3-methylbutanoate = 3-methyl-2-oxobutanoate + H2O. The catalysed reaction is (2R,3R)-2,3-dihydroxy-3-methylpentanoate = (S)-3-methyl-2-oxopentanoate + H2O. It participates in amino-acid biosynthesis; L-isoleucine biosynthesis; L-isoleucine from 2-oxobutanoate: step 3/4. The protein operates within amino-acid biosynthesis; L-valine biosynthesis; L-valine from pyruvate: step 3/4. Functionally, functions in the biosynthesis of branched-chain amino acids. Catalyzes the dehydration of (2R,3R)-2,3-dihydroxy-3-methylpentanoate (2,3-dihydroxy-3-methylvalerate) into 2-oxo-3-methylpentanoate (2-oxo-3-methylvalerate) and of (2R)-2,3-dihydroxy-3-methylbutanoate (2,3-dihydroxyisovalerate) into 2-oxo-3-methylbutanoate (2-oxoisovalerate), the penultimate precursor to L-isoleucine and L-valine, respectively. This is Dihydroxy-acid dehydratase from Corynebacterium aurimucosum (strain ATCC 700975 / DSM 44827 / CIP 107346 / CN-1) (Corynebacterium nigricans).